The primary structure comprises 682 residues: MESIHCNSLLNPNFSLNQRRRRINHAVLNRRDALLRSLNAVELRRSRTFSAVRTSNFSVTAAATDVGGRNSTDASVMTTAMSGVERGVRVGKSSSALEQLDIERGVCVPFRKYSPETVRSKVLESRGAVVSLVSRGVEIVWTLGLYWSTLTYDFLVGRDEEVVPFRARQLRNLLCNLGPSFIKAGQVLANRPDIIREDYMNELCILQDDVPPFPNEVAFNIIEEELGQPLENIFSKISSQTIAAASLGQVYRATLRATGEDVAIKVQRPQIEPIIYRDLFLFRTLASFLNGFSLQKLGCNAELIVDEFGEKLLEELDYTLEARNIEDFLENFKDDPTVKIPGVYKNLCGPRVLVMEWIDGIRCTDPQAIKDAGIDLNGFLTVGVSAALRQLLEFGLFHGDPHPGNIFAMQDGRIAYVDFGNVAVLSQQNKQILIDAVVHAVNEDYGEMANDFTRLGFLAKDTDVSPIVPALEAIWQNSAGKGLADFNFRSVTGQFNKLVYDFPIRIPERFSLVIRSLLTQEGICFTLKPDFKFLEVAYPYVAKRLLTDPNPALRERLIQVLFKDGVFQWKRLENLLSLAKENVAKMSSNPNLRVKRVESKLDLTDTIKDGARLFLLDEGIRRKLILALTEDSKLHVEELVDVYRLVEDEVDIPTLAMQVVQDLPNVFRDFVLSWSNSVLSDR.

Residues 1–79 (MESIHCNSLL…NSTDASVMTT (79 aa)) constitute a chloroplast transit peptide. Residues 236-567 (KISSQTIAAA…IQVLFKDGVF (332 aa)) form the Protein kinase domain. ATP-binding positions include 242-250 (IAAASLGQV) and K265. The Proton acceptor role is filled by D400.

The protein belongs to the protein kinase superfamily. ADCK protein kinase family. In terms of assembly, interacts with ABC1K3 in plastoglobules (PG). Expressed in all tissues (e.g. especially in leaves) at all developmental stages from seed germination to flowering, except in the root tips.

It localises to the plastid. Its subcellular location is the chloroplast. It is found in the plastoglobule. It catalyses the reaction L-seryl-[protein] + ATP = O-phospho-L-seryl-[protein] + ADP + H(+). The enzyme catalyses L-threonyl-[protein] + ATP = O-phospho-L-threonyl-[protein] + ADP + H(+). Kinase that can phosphorylate the tocopherol cyclase VTE1, a key enzyme of tocopherol (vitamin E) metabolism and involved in the recycling of oxidated alpha-tocopherol quinone, possibly stabilizing it at plastoglobules. Also regulates plastoglobule protein composition. Prevents photodamage of chloroplasts under continuous red light, thus working in opposition to ABC1K3. Together with ABC1K1, contributes to plastoglobule (PG) function in prenyl-lipid metabolism, stress response, and thylakoid remodeling. Involved in chlorophyll degradation and in the maintenance of the number of chlorophyll-binding photosynthetic thylakoid membranes. Ensures photosynthetic electron transport by regulating the homeostasis of plastoquinone, beta-carotene and xanthophyll lutein, as well as membrane antioxidant tocopherol metabolism. Seems to affect specifically stability or turnover of D1 protein, product of psbA, one of the four core subunits of the photosystem II (PSII). Required for photooxidative stress responses, including the induction of oxidative stress response genes (e.g. FSD1, CSD1, CAT1, and UTG71C1), to prevent photosystem II core and chlorophyll degradations. In Arabidopsis thaliana (Mouse-ear cress), this protein is Protein ACTIVITY OF BC1 COMPLEX KINASE 1, chloroplastic.